We begin with the raw amino-acid sequence, 343 residues long: Uroporphyrinogen decarboxylase (343 aa).

Residues 26 to 30 (RQAGR), aspartate 75, tyrosine 150, serine 205, and histidine 319 contribute to the substrate site.

The protein belongs to the uroporphyrinogen decarboxylase family. As to quaternary structure, homodimer.

The protein localises to the cytoplasm. It catalyses the reaction uroporphyrinogen III + 4 H(+) = coproporphyrinogen III + 4 CO2. The protein operates within porphyrin-containing compound metabolism; protoporphyrin-IX biosynthesis; coproporphyrinogen-III from 5-aminolevulinate: step 4/4. Its function is as follows. Catalyzes the decarboxylation of four acetate groups of uroporphyrinogen-III to yield coproporphyrinogen-III. The polypeptide is Uroporphyrinogen decarboxylase (Syntrophotalea carbinolica (strain DSM 2380 / NBRC 103641 / GraBd1) (Pelobacter carbinolicus)).